The chain runs to 215 residues: Adenylate kinase (215 aa).

Residue 10–15 (GAGKGT) coordinates ATP. Residues 30-59 (STGDMLRAAVKAETELGLKAKSVMDSGGLV) form an NMP region. Residues Thr-31, Arg-36, 57 to 59 (GLV), 85 to 88 (GFPR), and Gln-92 contribute to the AMP site. Residues 122–159 (GRRVHEGSGRIYHTIFNPPKVECIDDVTGEPLLQRKDD) are LID. Residues Arg-123 and 132–133 (IY) contribute to the ATP site. AMP is bound by residues Arg-156 and Arg-167. Position 201 (Gly-201) interacts with ATP.

The protein belongs to the adenylate kinase family. In terms of assembly, monomer.

The protein localises to the cytoplasm. It catalyses the reaction AMP + ATP = 2 ADP. The protein operates within purine metabolism; AMP biosynthesis via salvage pathway; AMP from ADP: step 1/1. Its function is as follows. Catalyzes the reversible transfer of the terminal phosphate group between ATP and AMP. Plays an important role in cellular energy homeostasis and in adenine nucleotide metabolism. The sequence is that of Adenylate kinase from Pseudomonas savastanoi pv. phaseolicola (strain 1448A / Race 6) (Pseudomonas syringae pv. phaseolicola (strain 1448A / Race 6)).